A 542-amino-acid polypeptide reads, in one-letter code: Calcium-dependent protein kinase 7 (542 aa).

Glycine 2 is lipidated: N-myristoyl glycine. In terms of domain architecture, Protein kinase spans 79 to 337 (YIIGRKLGQG…AHEVLRHPWI (259 aa)). Residues 85-93 (LGQGQFGTT) and lysine 108 contribute to the ATP site. Aspartate 203 functions as the Proton acceptor in the catalytic mechanism. Residues 343–373 (ATDQALDPSVISRLKQFSAMNKLKKLALRVI) are autoinhibitory domain. Residues 380–415 (EEIAGLREMFKAVDTKNRGVITFGELREGLRRFGAE) enclose the EF-hand 1 domain. The Ca(2+) site is built by aspartate 393, glutamate 404, aspartate 431, asparagine 433, threonine 435, glutamate 440, aspartate 465, aspartate 467, serine 469, tyrosine 471, lysine 476, aspartate 499, asparagine 501, aspartate 503, glutamine 505, and glutamate 510. An EF-hand 2; degenerate domain is found at 416–451 (FKDTEIGDIMEAAHNDNNVTIHYEEFIAATLPLNKI). EF-hand domains are found at residues 452–487 (EREEHLLAAFTYFDKDGSGYITVDKLQRACGEHNME) and 488–521 (DSLLEEIISEVDQNNDGQIDYAEFVAMMQGSNVG).

Belongs to the protein kinase superfamily. Ser/Thr protein kinase family. CDPK subfamily. As to expression, expressed in roots. Expressed in leaf sheaths.

It localises to the membrane. The protein resides in the cytoplasm. Its subcellular location is the cytosol. It carries out the reaction L-seryl-[protein] + ATP = O-phospho-L-seryl-[protein] + ADP + H(+). It catalyses the reaction L-threonyl-[protein] + ATP = O-phospho-L-threonyl-[protein] + ADP + H(+). With respect to regulation, activated by calcium. Autophosphorylation may play an important role in the regulation of the kinase activity. In terms of biological role, may play a role in signal transduction pathways that involve calcium as a second messenger. May be a signaling component in the response to gibberellin and cold stress. The chain is Calcium-dependent protein kinase 7 from Oryza sativa subsp. japonica (Rice).